The chain runs to 615 residues: Glutamine--fructose-6-phosphate aminotransferase [isomerizing] (615 aa).

Cys-2 (nucleophile; for GATase activity) is an active-site residue. Residues 2-220 (CGIVGYVGPQ…QDQVVELRRD (219 aa)) form the Glutamine amidotransferase type-2 domain. 2 SIS domains span residues 287-427 (IPPG…VRGT) and 460-605 (LARS…VDQP). The active-site For Fru-6P isomerization activity is Lys-610.

Homodimer.

The protein localises to the cytoplasm. It carries out the reaction D-fructose 6-phosphate + L-glutamine = D-glucosamine 6-phosphate + L-glutamate. Catalyzes the first step in hexosamine metabolism, converting fructose-6P into glucosamine-6P using glutamine as a nitrogen source. The sequence is that of Glutamine--fructose-6-phosphate aminotransferase [isomerizing] from Streptomyces coelicolor (strain ATCC BAA-471 / A3(2) / M145).